A 246-amino-acid chain; its full sequence is Uridylate kinase (246 aa).

18–21 (KVSG) is an ATP binding site. Residue Gly-60 participates in UMP binding. ATP is bound by residues Gly-61 and Arg-65. UMP is bound by residues Asp-80 and 141–148 (TGNPFFTT). 4 residues coordinate ATP: Thr-168, Gln-169, Tyr-174, and Asp-177.

Belongs to the UMP kinase family. Homohexamer.

The protein resides in the cytoplasm. It catalyses the reaction UMP + ATP = UDP + ADP. The protein operates within pyrimidine metabolism; CTP biosynthesis via de novo pathway; UDP from UMP (UMPK route): step 1/1. Its activity is regulated as follows. Inhibited by UTP. Its function is as follows. Catalyzes the reversible phosphorylation of UMP to UDP. This is Uridylate kinase from Gluconobacter oxydans (strain 621H) (Gluconobacter suboxydans).